Consider the following 137-residue polypeptide: ATP synthase epsilon chain, chloroplastic (137 aa).

It belongs to the ATPase epsilon chain family. In terms of assembly, F-type ATPases have 2 components, CF(1) - the catalytic core - and CF(0) - the membrane proton channel. CF(1) has five subunits: alpha(3), beta(3), gamma(1), delta(1), epsilon(1). CF(0) has three main subunits: a, b and c.

The protein localises to the plastid. It localises to the chloroplast thylakoid membrane. Functionally, produces ATP from ADP in the presence of a proton gradient across the membrane. The sequence is that of ATP synthase epsilon chain, chloroplastic from Hordeum vulgare (Barley).